The chain runs to 314 residues: MATTAGEQANYLQSADSMSDGRQHHPEEAGEKKQEEQKKSWGEWLQDLKIFIWNPEKKEVLGRDKKSWALILLFYFILYCFLAGLFALCIYGLLATISPYVPTYRDRVFPPGLTIRPQFNALYFSFNPSDRSTWSSHAESLNTFLEDYNDEIQQEKNLECTPGKYFFQPGEDHEERKACQFRRSLLKNCSGIEDPTFGFAQGKPCILLKMNRIVGYQAGSGIPIYVTCEILKADASYLGPVNFYPSDKFDLMYYPYYGKLTHVNYTSPLIAMQFTEVKNNQDINIQCKINGKDIISDHDKDRFLGRVAFTLHIG.

Residues 1 to 17 show a composition bias toward polar residues; it reads MATTAGEQANYLQSADS. The interval 1–37 is disordered; sequence MATTAGEQANYLQSADSMSDGRQHHPEEAGEKKQEEQ. The Cytoplasmic portion of the chain corresponds to 1 to 69; it reads MATTAGEQAN…VLGRDKKSWA (69 aa). A compositionally biased stretch (basic and acidic residues) spans 19-37; sequence SDGRQHHPEEAGEKKQEEQ. The helical transmembrane segment at 70-90 threads the bilayer; sequence LILLFYFILYCFLAGLFALCI. The Extracellular portion of the chain corresponds to 91–314; that stretch reads YGLLATISPY…GRVAFTLHIG (224 aa). Cys160 and Cys179 are joined by a disulfide. The N-linked (GlcNAc...) asparagine glycan is linked to Asn188. 2 disulfides stabilise this stretch: Cys189-Cys205 and Cys228-Cys287. The N-linked (GlcNAc...) asparagine glycan is linked to Asn264.

Belongs to the X(+)/potassium ATPases subunit beta family. As to quaternary structure, composed of two subunits: alpha (catalytic) and beta (accessory). Glycosylated. Expressed in skeletal muscle, liver, lung, kidney, heart, brain and skin.

The protein resides in the membrane. Functionally, this is the non-catalytic component of the active enzyme, which catalyzes the hydrolysis of ATP coupled with the exchange of Na(+) and K(+) ions across the plasma membrane. This is Protein ATP1B4 (atp1b4) from Xenopus laevis (African clawed frog).